We begin with the raw amino-acid sequence, 111 residues long: Ig kappa chain V-III region PC 2413 (111 aa).

Residues 1-23 (DIVLTQSPASLAVSLGQRATISC) are framework-1. Cys23 and Cys92 are joined by a disulfide. The complementarity-determining-1 stretch occupies residues 24-38 (RASESVVNYGVSLMH). The segment at 39 to 53 (WFQQKPGQPPKLLIY) is framework-2. The tract at residues 54-60 (GASNRGS) is complementarity-determining-2. Residues 61–92 (GVPARFSGSGSGTDFSLIIHPMEEDDSAMYFC) are framework-3. The tract at residues 93-101 (HQTKEVPWT) is complementarity-determining-3. The tract at residues 102-111 (FGGGTDLEIE) is framework-4.

The sequence is that of Ig kappa chain V-III region PC 2413 from Mus musculus (Mouse).